The chain runs to 705 residues: Ribosomal RNA large subunit methyltransferase K/L (705 aa).

Positions 43-154 (LLYQSLLWSR…RDTASVALDL (112 aa)) constitute a THUMP domain.

This sequence belongs to the methyltransferase superfamily. RlmKL family.

The protein localises to the cytoplasm. The catalysed reaction is guanosine(2445) in 23S rRNA + S-adenosyl-L-methionine = N(2)-methylguanosine(2445) in 23S rRNA + S-adenosyl-L-homocysteine + H(+). It catalyses the reaction guanosine(2069) in 23S rRNA + S-adenosyl-L-methionine = N(2)-methylguanosine(2069) in 23S rRNA + S-adenosyl-L-homocysteine + H(+). Functionally, specifically methylates the guanine in position 2445 (m2G2445) and the guanine in position 2069 (m7G2069) of 23S rRNA. The protein is Ribosomal RNA large subunit methyltransferase K/L of Pectobacterium atrosepticum (strain SCRI 1043 / ATCC BAA-672) (Erwinia carotovora subsp. atroseptica).